We begin with the raw amino-acid sequence, 233 residues long: Orotidine 5'-phosphate decarboxylase (233 aa).

Substrate-binding positions include D11, K33, 60–69 (DLKFHDIPNT), T120, R181, Q190, G210, and R211. Catalysis depends on K62, which acts as the Proton donor.

The protein belongs to the OMP decarboxylase family. Type 1 subfamily. As to quaternary structure, homodimer.

It carries out the reaction orotidine 5'-phosphate + H(+) = UMP + CO2. It participates in pyrimidine metabolism; UMP biosynthesis via de novo pathway; UMP from orotate: step 2/2. Functionally, catalyzes the decarboxylation of orotidine 5'-monophosphate (OMP) to uridine 5'-monophosphate (UMP). This Vibrio campbellii (strain ATCC BAA-1116) protein is Orotidine 5'-phosphate decarboxylase.